The following is a 444-amino-acid chain: tRNA pseudouridine synthase Pus10 (444 aa).

D265 functions as the Nucleophile in the catalytic mechanism. The substrate site is built by Y333 and Y405.

Belongs to the pseudouridine synthase Pus10 family.

The enzyme catalyses uridine(54) in tRNA = pseudouridine(54) in tRNA. The catalysed reaction is uridine(55) in tRNA = pseudouridine(55) in tRNA. In terms of biological role, responsible for synthesis of pseudouridine from uracil-54 and uracil-55 in the psi GC loop of transfer RNAs. The protein is tRNA pseudouridine synthase Pus10 of Thermofilum pendens (strain DSM 2475 / Hrk 5).